Here is a 495-residue protein sequence, read N- to C-terminus: MARAAPLLAVLATVLTTAAAGGDAPPGKIAVIGAGIGGSAVAHFLQQHFGPRVQIVVYEKGTVGGRLATISVNKQNYESGAASFHSLSLHMQDFVKLLGLRQRREVVGRSAIFGGEHFVLEETDWYLLNLFRLWWYYGISFLRLQMWVEEVMEKFMRIYKYQAHGYAFSGVEELLYSLGEATFVNMTQRSVAESLLQVGVTQRFIDDVVSAVLRASYGQSASMPAFAGAMSLAGAQGNLWSVEGGNKLVCSGLLKLAKATVIHATVTSVTLHSTEGKALYQVAYESDKGNSSDFYDIVVIATPLHLDNSSNNNITFEGFTPPIEDIQGSFQPTVVSLVHGYLNSSYFGFPDPKLFPFANILTTDFPSFFCTLDNICPVNISASFRRKQPQEAAVWRVQSPKPLFRTELKTLFRSYYSVQTAEWQAHPLYGSRRTLPRFALHDQLFYLNALEWAASSVEVTAVAAKNVALLAYNRWYQDLDKIDQKDLIHKVKTEL.

An N-terminal signal peptide occupies residues 1 to 22 (MARAAPLLAVLATVLTTAAAGG). 2 N-linked (GlcNAc...) asparagine glycosylation sites follow: Asn185 and Asn343.

Belongs to the prenylcysteine oxidase family. It depends on FAD as a cofactor.

It localises to the secreted. Its function is as follows. Likely to have oxidoreductase activity. Required in the mevalonate pathway to regulate prenylation and enhances the bactericidal activity of neutrophils. This chain is Prenylcysteine oxidase 1-like (Pcyox1l), found in Mus musculus (Mouse).